Here is a 132-residue protein sequence, read N- to C-terminus: Small ribosomal subunit protein uS8 (132 aa).

The protein belongs to the universal ribosomal protein uS8 family. In terms of assembly, part of the 30S ribosomal subunit. Contacts proteins S5 and S12.

Its function is as follows. One of the primary rRNA binding proteins, it binds directly to 16S rRNA central domain where it helps coordinate assembly of the platform of the 30S subunit. This chain is Small ribosomal subunit protein uS8, found in Caulobacter vibrioides (strain ATCC 19089 / CIP 103742 / CB 15) (Caulobacter crescentus).